We begin with the raw amino-acid sequence, 1074 residues long: Semaphorin-5A (1074 aa).

A signal peptide spans 1–22; sequence MKGTCVIAWLFSSLGLWRLAHP. Over 23–968 the chain is Extracellular; it reads EAQGTTQCQR…EEKRCGEFNM (946 aa). A Sema domain is found at 35–484; it reads HPVISYKEIG…LREHVVKIPL (450 aa). 2 disulfides stabilise this stretch: C104-C114 and C131-C140. N-linked (GlcNAc...) asparagine glycosylation is found at N142, N168, N227, and N277. Disulfide bonds link C254–C357 and C278–C320. Residues N323, N367, and N437 are each glycosylated (N-linked (GlcNAc...) asparagine). 2 disulfide bridges follow: C487-C504 and C496-C513. N-linked (GlcNAc...) asparagine glycans are attached at residues N536 and N591. TSP type-1 domains follow at residues 540-593, 595-651, 653-702, 707-765, 784-839, 841-896, and 897-944; these read DGHF…ANCS, NGGW…LLCP, HMFW…NPCP, TTPW…GCST, NGAW…LPCP, DGVW…QPCP, and ESWS…VFDS. Cystine bridges form between C607–C644, C611–C650, C622–C634, C665–C696, C669–C701, and C680–C686. Residue N717 is glycosylated (N-linked (GlcNAc...) asparagine). Disulfide bonds link C796–C833, C800–C838, C811–C823, C853–C890, C857–C895, and C868–C880. An N-linked (GlcNAc...) asparagine glycan is attached at N933. Residues 969 to 989 traverse the membrane as a helical segment; sequence FHMIAVGLSSSILGCLLTLLV. Residues 990–1074 are Cytoplasmic-facing; it reads YTYCQRYQQQ…FTDLNNYDEY (85 aa).

The protein belongs to the semaphorin family. As to quaternary structure, binds PLXNB3.

The protein resides in the membrane. Functionally, bifunctional axonal guidance cue regulated by sulfated proteoglycans; attractive effects result from interactions with heparan sulfate proteoglycans (HSPGs), while the inhibitory effects depend on interactions with chondroitin sulfate proteoglycans (CSPGs). Ligand for receptor PLXNB3. In glioma cells, SEMA5A stimulation of PLXNB3 results in the disassembly of F-actin stress fibers, disruption of focal adhesions and cellular collapse as well as inhibition of cell migration and invasion through ARHGDIA-mediated inactivation of RAC1. May promote angiogenesis by increasing endothelial cell proliferation and migration and inhibiting apoptosis. This Homo sapiens (Human) protein is Semaphorin-5A (SEMA5A).